Consider the following 379-residue polypeptide: Probable G-protein coupled receptor No18 (379 aa).

At 5-36 (EASITGRTAPELNASAAPLDDERELGETVAAT) the chain is on the extracellular side. Asn17 carries an N-linked (GlcNAc...) asparagine glycan. A helical transmembrane segment spans residues 37–58 (ALLLAIILVTIVGNSLVIISVF). The Cytoplasmic portion of the chain corresponds to 59–68 (TYRPLRSVQN). A helical membrane pass occupies residues 69-90 (FFVVSLAVADLTVALFVLPLNV). The Extracellular portion of the chain corresponds to 91–107 (AYRLLNQWLLGSYLCQM). Cysteines 105 and 184 form a disulfide. Residues 108–128 (WLTCDILCCTSSILNLCVIAL) form a helical membrane-spanning segment. Residues 129–148 (DRYWAITDPINYAQKRTIRR) are Cytoplasmic-facing. A helical transmembrane segment spans residues 149-171 (VNTMIAAVWALSLVISVPPLLGW). Topologically, residues 172–196 (NDWPAQFTEDTPCTLTQERLFVVYS) are extracellular. A helical transmembrane segment spans residues 197 to 218 (SSGSFFIPLIIMSVVYAKIFFA). At 219–303 (TKRRLRERTR…LSKERKAARV (85 aa)) the chain is on the cytoplasmic side. The interval 234 to 276 (AVPAPPQRTSSRPLAELESVASQEDETEPSPEPEPLSSRADKP) is disordered. The chain crosses the membrane as a helical span at residues 304-325 (LGVIMGVFVVCWLPFFLMYAIV). Over 326–340 (PFCTNCAPPSQRVVD) the chain is Extracellular. A helical membrane pass occupies residues 341 to 362 (FVTWLGYVNSSLNPIIYTIYNK). Residues 363–375 (DFRTAFSRLLRCD) are Cytoplasmic-facing.

Belongs to the G-protein coupled receptor 1 family.

Its subcellular location is the cell membrane. Probable G-protein coupled receptor for an amine. This Amphibalanus amphitrite (Striped barnacle) protein is Probable G-protein coupled receptor No18.